The primary structure comprises 1233 residues: Mitogen-activated protein kinase kinase kinase kinase 4 (1233 aa).

Ala2 is subject to N-acetylalanine. The residue at position 5 (Ser5) is a Phosphoserine. The region spanning 25–289 is the Protein kinase domain; the sequence is FELVEVVGNG…EQLLKHPFIR (265 aa). ATP is bound by residues 31-39 and Lys53; that span reads VGNGTYGQV. Asp152 acts as the Proton acceptor in catalysis. Disordered stretches follow at residues 305–348, 401–463, and 489–805; these read IDRT…VPGE, QKEQ…VERE, and QAML…ETES. Acidic residues predominate over residues 316-337; it reads DETEYEYSGSEEEEEEVPEQEG. Ser323 and Ser325 each carry phosphoserine. Residues 521 to 537 are compositionally biased toward basic and acidic residues; sequence PEPKPHYDPADRAREVQ. At Ser543 the chain carries Phosphoserine. Polar residues predominate over residues 544–559; the sequence is LKNNVSPVSRSHSFSD. Phosphoserine occurs at positions 619, 621, 629, and 646. Positions 654–663 are enriched in basic and acidic residues; it reads LLWERVEKLV. Residues 666 to 692 show a composition bias toward low complexity; sequence PGSGSSSGSSNSGSQPGSHPGSQSGSG. A phosphoserine mark is found at Ser691, Ser703, and Ser706. 2 stretches are compositionally biased toward basic and acidic residues: residues 713–726 and 741–756; these read SAAKKPDDKKEVFR and KELRAVEDVRPPHKVT. The span at 766–781 shows a compositional bias: acidic residues; it reads GTTDEEEEDVEQEGAD. A compositionally biased stretch (polar residues) spans 783-803; sequence STSGPEDTRAASSPNLSNGET. 5 positions are modified to phosphoserine: Ser785, Ser794, Ser795, Ser799, and Ser817. The residue at position 822 (Thr822) is a Phosphothreonine. Phosphoserine occurs at positions 846, 849, 894, and 907. A mediates interaction with RAP2A region spans residues 852-1206; it reads PFIDPRLLQI…LKFLCGRNDK (355 aa). Residues 920–1207 enclose the CNH domain; that stretch reads NSEILCAALW…KFLCGRNDKV (288 aa).

The protein belongs to the protein kinase superfamily. STE Ser/Thr protein kinase family. STE20 subfamily. Interacts with the SH3 domain of the adapter proteins Nck. Interacts (via its CNH regulatory domain) with ATL1 (via the N-terminal region). Interacts with RAP2A (GTP-bound form preferentially). It depends on Mg(2+) as a cofactor. In terms of tissue distribution, appears to be ubiquitous, expressed in all tissue types examined. Highest levels observed in heart and brain.

Its subcellular location is the cytoplasm. The enzyme catalyses L-seryl-[protein] + ATP = O-phospho-L-seryl-[protein] + ADP + H(+). It carries out the reaction L-threonyl-[protein] + ATP = O-phospho-L-threonyl-[protein] + ADP + H(+). In terms of biological role, serine/threonine kinase that plays a role in the response to environmental stress and cytokines such as TNF-alpha. Appears to act upstream of the JUN N-terminal pathway. Activator of the Hippo signaling pathway which plays a pivotal role in organ size control and tumor suppression by restricting proliferation and promoting apoptosis. MAP4Ks act in parallel to and are partially redundant with STK3/MST2 and STK4/MST2 in the phosphorylation and activation of LATS1/2, and establish MAP4Ks as components of the expanded Hippo pathway. Phosphorylates SMAD1 on Thr-322. In Mus musculus (Mouse), this protein is Mitogen-activated protein kinase kinase kinase kinase 4 (Map4k4).